Here is a 55-residue protein sequence, read N- to C-terminus: Large ribosomal subunit protein bL33 (55 aa).

Belongs to the bacterial ribosomal protein bL33 family.

In Parvibaculum lavamentivorans (strain DS-1 / DSM 13023 / NCIMB 13966), this protein is Large ribosomal subunit protein bL33.